Reading from the N-terminus, the 465-residue chain is Trigger factor (465 aa).

Positions 163 to 248 (GDVINFNFKG…INKIKENQPA (86 aa)) constitute a PPIase FKBP-type domain. Residues 431 to 465 (EIVNKNQNDNEIEQDKEQKDNNEEKIKQENNLENK) form a disordered region. Basic and acidic residues predominate over residues 443–465 (EQDKEQKDNNEEKIKQENNLENK).

Belongs to the FKBP-type PPIase family. Tig subfamily.

It localises to the cytoplasm. The enzyme catalyses [protein]-peptidylproline (omega=180) = [protein]-peptidylproline (omega=0). In terms of biological role, involved in protein export. Acts as a chaperone by maintaining the newly synthesized protein in an open conformation. Functions as a peptidyl-prolyl cis-trans isomerase. This chain is Trigger factor, found in Mesomycoplasma hyopneumoniae (strain J / ATCC 25934 / NCTC 10110) (Mycoplasma hyopneumoniae).